The primary structure comprises 445 residues: 3-phosphoshikimate 1-carboxyvinyltransferase (445 aa).

Residues Lys-21, Ser-22, and Arg-26 each contribute to the 3-phosphoshikimate site. A phosphoenolpyruvate-binding site is contributed by Lys-21. The phosphoenolpyruvate site is built by Gly-92 and Arg-120. Positions 165, 166, 307, and 334 each coordinate 3-phosphoshikimate. Phosphoenolpyruvate is bound at residue Gln-166. The active-site Proton acceptor is the Asp-307. The phosphoenolpyruvate site is built by Arg-338, Arg-379, and Lys-405.

The protein belongs to the EPSP synthase family. Monomer.

It is found in the cytoplasm. The enzyme catalyses 3-phosphoshikimate + phosphoenolpyruvate = 5-O-(1-carboxyvinyl)-3-phosphoshikimate + phosphate. It functions in the pathway metabolic intermediate biosynthesis; chorismate biosynthesis; chorismate from D-erythrose 4-phosphate and phosphoenolpyruvate: step 6/7. Its function is as follows. Catalyzes the transfer of the enolpyruvyl moiety of phosphoenolpyruvate (PEP) to the 5-hydroxyl of shikimate-3-phosphate (S3P) to produce enolpyruvyl shikimate-3-phosphate and inorganic phosphate. This is 3-phosphoshikimate 1-carboxyvinyltransferase from Chlamydia abortus (strain DSM 27085 / S26/3) (Chlamydophila abortus).